Reading from the N-terminus, the 542-residue chain is Glucans biosynthesis protein G (542 aa).

A signal peptide spans 1–34 (MVSLLRCPSSKPYSSLICSLTLGAVVALSGVAYA).

The protein belongs to the OpgD/OpgG family.

It is found in the periplasm. It functions in the pathway glycan metabolism; osmoregulated periplasmic glucan (OPG) biosynthesis. In terms of biological role, involved in the biosynthesis of osmoregulated periplasmic glucans (OPGs). The chain is Glucans biosynthesis protein G from Shewanella baltica (strain OS223).